A 241-amino-acid polypeptide reads, in one-letter code: Large ribosomal subunit protein uL1 (241 aa).

The protein belongs to the universal ribosomal protein uL1 family. Part of the 50S ribosomal subunit.

In terms of biological role, binds directly to 23S rRNA. The L1 stalk is quite mobile in the ribosome, and is involved in E site tRNA release. Its function is as follows. Protein L1 is also a translational repressor protein, it controls the translation of the L11 operon by binding to its mRNA. The chain is Large ribosomal subunit protein uL1 from Streptomyces coelicolor (strain ATCC BAA-471 / A3(2) / M145).